A 157-amino-acid chain; its full sequence is SsrA-binding protein (157 aa).

This sequence belongs to the SmpB family.

It localises to the cytoplasm. Required for rescue of stalled ribosomes mediated by trans-translation. Binds to transfer-messenger RNA (tmRNA), required for stable association of tmRNA with ribosomes. tmRNA and SmpB together mimic tRNA shape, replacing the anticodon stem-loop with SmpB. tmRNA is encoded by the ssrA gene; the 2 termini fold to resemble tRNA(Ala) and it encodes a 'tag peptide', a short internal open reading frame. During trans-translation Ala-aminoacylated tmRNA acts like a tRNA, entering the A-site of stalled ribosomes, displacing the stalled mRNA. The ribosome then switches to translate the ORF on the tmRNA; the nascent peptide is terminated with the 'tag peptide' encoded by the tmRNA and targeted for degradation. The ribosome is freed to recommence translation, which seems to be the essential function of trans-translation. This Chlorobium phaeovibrioides (strain DSM 265 / 1930) (Prosthecochloris vibrioformis (strain DSM 265)) protein is SsrA-binding protein.